Reading from the N-terminus, the 441-residue chain is MNYQDNSLKSLKLGQKTEYASQYDRTLLQPVPRALNRDGLGITQNQPFTIGADIWTAYEISWLNEKGLPQVAIADIYLDYQSQNLIESKSFKLYLNSFNQSKFTDFNAVQQTMQRDLSECAQGDVKVRLNPVAVYDAQKINHLQGDCIDEQDIEITSYEFNANWLKDCVSNEIVEEKLVSHLLKSNCLITNQPDWGTDQAQQAILTARNNKLNFETQRKTAEQTLRNLLNLKPNEALNITFPHIMNVKTAGVNLNVPVSVIANRPDVKAAQFRLSSAFKNAKATQKSWFPEVNLGASLSSTASTVGTALHNPVAAGTVGISLPFLNWNTVKWNVKISEADYETARLNYEQRITTALNNVDTNYFAFTQAQSTLSNLQQTHSYNQRITQYYRNRYNAGVSELREWLVAANTEKSSQLAILNAKYQVLQSENAVYSSMAGYYL.

Belongs to the outer membrane factor (OMF) (TC 1.B.17) family.

This is an uncharacterized protein from Haemophilus influenzae (strain ATCC 51907 / DSM 11121 / KW20 / Rd).